The sequence spans 244 residues: MKNNYTSLKSSIDEEGELKTDHEIDLEKGPLPEYDSEEESTLPPYSDHARLSNSPNTHRENNPSRSTDNSSPFLIKLLISFTPIYVLNVLAICYLKYNDAFFKNYGAAEWTLFGFWCLVCTLALIFLTYFYETWTKAVGKGIKHFLKKWENMPMAFSEVFLFNILVGSPRMNLRYIFGDRWGLKWSLAEHITFVVLSILVFIAETVKPGSIRVNLIRKMGYEAKQQVNEYTAVPLREMNPESEA.

Positions 1–10 are enriched in polar residues; it reads MKNNYTSLKS. A disordered region spans residues 1–68; that stretch reads MKNNYTSLKS…RENNPSRSTD (68 aa). The span at 17–30 shows a compositional bias: basic and acidic residues; sequence ELKTDHEIDLEKGP. The next 4 helical transmembrane spans lie at 73–93, 110–130, 149–169, and 183–203; these read FLIK…LAIC, WTLF…LTYF, WENM…VGSP, and LKWS…VFIA.

Belongs to the WTF family. In terms of assembly, homomer. Interacts with other proteins that exhibit high sequence similarity.

It is found in the spore membrane. Its subcellular location is the vacuole membrane. Functionally, acts as a suppressor component of the dual wtf meiotic drive system, and can suppress but not confer meiotic drive by compatible poisons. Wtf meiotic drive systems promote unequal transmission of alleles from the parental zygote to progeny spores by encoding a poison and an antidote from the same locus; the poison is trans-acting and forms toxic aggregates in all spores within an ascus, wherease the antidote is spore-specific and targets aggregates for degradation by the vacuole. Meiotic drive by wtf systems therefore lead to poisoning of all progeny that do not inherit the dual poison/antidote allele, or express a compatible antidote. The polypeptide is Meiotic drive suppressor wtf2 (Schizosaccharomyces kambucha (Fission yeast)).